Here is a 755-residue protein sequence, read N- to C-terminus: Ribosome biogenesis protein BOP1 (755 aa).

Polar residues-rich tracts occupy residues 1-10 and 43-61; these read MSQEPSSSFS and ELSS…TEPN. Residues 1–65 form a disordered region; it reads MSQEPSSSFS…PLTEPNNIPI (65 aa). Residues 309 to 754 form an interaction with EB1 region; sequence MDSMLPTLPN…SGTDGVLRLF (446 aa). One copy of the WD 1 repeat lies at 335 to 374; that stretch reads TGTRRINGLTFSPKGMFFAVGGRDCILRVFETYSGRQVRA. A disordered region spans residues 482-505; sequence YNEGSEDDDAAESARFNEERHQRG. The span at 496 to 505 shows a compositional bias: basic and acidic residues; sequence RFNEERHQRG. WD repeat units lie at residues 617–655, 659–698, and 725–755; these read PGVK…EPTA, YHTS…LVKM, and DGSV…RLFK.

It belongs to the WD repeat BOP1/ERB1 family. Interacts (via C-terminal WD repeats) with giardin subunit beta. Interacts (via C-terminal WD repeats) with EB1.

The protein resides in the nucleus. The protein localises to the nucleolus. It is found in the nucleus membrane. Functionally, required for maturation of ribosomal RNAs and formation of the large ribosomal subunit. The chain is Ribosome biogenesis protein BOP1 from Giardia intestinalis (Giardia lamblia).